Consider the following 74-residue polypeptide: Small ribosomal subunit protein bS20c (74 aa).

This sequence belongs to the bacterial ribosomal protein bS20 family.

Its subcellular location is the plastid. It is found in the chloroplast. Its function is as follows. Binds directly to 16S ribosomal RNA. This is Small ribosomal subunit protein bS20c from Cyanidioschyzon merolae (strain NIES-3377 / 10D) (Unicellular red alga).